A 392-amino-acid polypeptide reads, in one-letter code: Na(+)/H(+) antiporter NhaA (392 aa).

Helical transmembrane passes span 16–36, 58–78, 93–113, 124–144, 153–173, 176–196, 199–219, 257–277, 295–315, 328–348, and 362–382; these read ILLI…LSAA, LLLW…GLEV, ITLP…IFIL, GWAI…SLLG, IFLM…IALF, TDLS…LFIM, MDVA…VSVL, DLHY…NAGV, VMLG…WLAI, WMML…SLFV, and ADKL…YLIL.

Belongs to the NhaA Na(+)/H(+) (TC 2.A.33) antiporter family.

The protein resides in the cell inner membrane. The catalysed reaction is Na(+)(in) + 2 H(+)(out) = Na(+)(out) + 2 H(+)(in). Its function is as follows. Na(+)/H(+) antiporter that extrudes sodium in exchange for external protons. This Sulfurovum sp. (strain NBC37-1) protein is Na(+)/H(+) antiporter NhaA.